Here is a 276-residue protein sequence, read N- to C-terminus: U6 snRNA phosphodiesterase 1 (276 aa).

The segment at 1 to 58 is disordered; sequence MIVNYSSSSSEEESGSSSSPSGKRQKLDTETSEALDHGSAQRKVCKSSHLTPRLPLPE. The Proton acceptor role is filled by His-131. AMP is bound by residues 131 to 133, Tyr-213, and 215 to 221; these read HLS and DPSFHIS. UMP is bound by residues Tyr-213 and 217 to 221; that span reads SFHIS. His-219 serves as the catalytic Proton donor.

Belongs to the 2H phosphoesterase superfamily. USB1 family.

It localises to the nucleus. It catalyses the reaction a 3'-end uridylyl-uridine-RNA = a 3'-end 2',3'-cyclophospho-uridine-RNA + uridine. The catalysed reaction is a 3'-end uridylyl-adenosine-RNA = a 3'-end 2',3'-cyclophospho-uridine-RNA + adenosine. Functionally, 3'-5' RNA exonuclease that trims the 3' end of oligo(U) and oligo(A) tracts of the pre-U6 small nuclear RNA (snRNA) molecule, leading to the formation of a mature U6 snRNA 3' end-terminated with a 2',3'-cyclic phosphate. Participates in the U6 snRNA 3' end processing that prevents U6 snRNA degradation. In addition also removes uridines from the 3' end of U6atac snRNA and possibly the vault RNA VTRNA1-1. The polypeptide is U6 snRNA phosphodiesterase 1 (Danio rerio (Zebrafish)).